The following is a 179-amino-acid chain: MGIVIQHNKDRLVRPKQPLSEDITLLVKIYRLPGSKCSTAPFNKVVLRRLFMSRTHRPPMSVSRMIRKMKLPGRENRTAVVVGTVTDDVRIHEIPNLKVSALKITRRNRTRILKFVQIMRFVGLALAAPNRQKSVLLSAPRNARDVSRHFANAPSIPHTKPYVLSNKLRRRGSKLTYNN.

The protein belongs to the eukaryotic ribosomal protein eL18 family. In terms of assembly, component of the large ribosomal subunit.

Its subcellular location is the cytoplasm. The protein localises to the cytosol. It is found in the rough endoplasmic reticulum. Functionally, component of the large ribosomal subunit. The ribosome is a large ribonucleoprotein complex responsible for the synthesis of proteins in the cell. The polypeptide is Large ribosomal subunit protein eL18 (rpl18) (Salmo salar (Atlantic salmon)).